Reading from the N-terminus, the 702-residue chain is Putative endo-beta-N-acetylglucosaminidase (702 aa).

An N-terminal signal peptide occupies residues 1-23; it reads MKKVRFIFLALLFFLASPEGAMA. Cell wall-binding repeat units follow at residues 42 to 63, 65 to 84, 86 to 105, 124 to 145, 147 to 166, 185 to 206, 208 to 227, 229 to 248, 250 to 271, 273 to 292, 294 to 315, 317 to 336, 338 to 359, 361 to 380, and 382 to 403; these read ANEW…DANY, ENEW…GGYM, KSEW…DGKM, IEDW…DGQH, EKEW…GGYL, QQGW…NGNY, DKEW…GGYM, ANEW…DGKI, EKEW…GGYM, and ANEW…DGKM.

It belongs to the glycosyl hydrolase 73 family.

It is found in the secreted. The enzyme catalyses an N(4)-(oligosaccharide-(1-&gt;3)-[oligosaccharide-(1-&gt;6)]-beta-D-Man-(1-&gt;4)-beta-D-GlcNAc-(1-&gt;4)-alpha-D-GlcNAc)-L-asparaginyl-[protein] + H2O = an oligosaccharide-(1-&gt;3)-[oligosaccharide-(1-&gt;6)]-beta-D-Man-(1-&gt;4)-D-GlcNAc + N(4)-(N-acetyl-beta-D-glucosaminyl)-L-asparaginyl-[protein]. Its function is as follows. Plays an important role in cell wall degradation and cell separation. This chain is Putative endo-beta-N-acetylglucosaminidase (lytB), found in Streptococcus pneumoniae (strain ATCC BAA-255 / R6).